The sequence spans 91 residues: Small ribosomal subunit protein uS15c (91 aa).

It belongs to the universal ribosomal protein uS15 family. As to quaternary structure, part of the 30S ribosomal subunit.

It localises to the plastid. Its subcellular location is the chloroplast. The sequence is that of Small ribosomal subunit protein uS15c (rps15) from Adiantum capillus-veneris (Maidenhair fern).